A 264-amino-acid chain; its full sequence is Transmembrane protein 41A (264 aa).

An N-terminal signal peptide occupies residues Met1–Ala17. 5 helical membrane-spanning segments follow: residues Ala67–Gly87, Gly100–Leu122, Leu153–Leu173, Ala175–Pro195, and Trp219–Ile239. The tract at residues Gly96–Leu207 is VTT domain. The N-linked (GlcNAc...) asparagine glycan is linked to Asn250.

Belongs to the TMEM41 family.

It localises to the membrane. The chain is Transmembrane protein 41A (TMEM41A) from Homo sapiens (Human).